A 234-amino-acid chain; its full sequence is Ubiquinone biosynthesis O-methyltransferase (234 aa).

S-adenosyl-L-methionine-binding residues include Arg-37, Gly-56, Asp-77, and Met-121.

Belongs to the methyltransferase superfamily. UbiG/COQ3 family.

It catalyses the reaction a 3-demethylubiquinol + S-adenosyl-L-methionine = a ubiquinol + S-adenosyl-L-homocysteine + H(+). The enzyme catalyses a 3-(all-trans-polyprenyl)benzene-1,2-diol + S-adenosyl-L-methionine = a 2-methoxy-6-(all-trans-polyprenyl)phenol + S-adenosyl-L-homocysteine + H(+). It functions in the pathway cofactor biosynthesis; ubiquinone biosynthesis. Functionally, O-methyltransferase that catalyzes the 2 O-methylation steps in the ubiquinone biosynthetic pathway. This chain is Ubiquinone biosynthesis O-methyltransferase, found in Aromatoleum aromaticum (strain DSM 19018 / LMG 30748 / EbN1) (Azoarcus sp. (strain EbN1)).